Here is a 158-residue protein sequence, read N- to C-terminus: Protein OPG060 (158 aa).

It belongs to the orthopoxvirus OPG058 family.

The sequence is that of Protein OPG060 (OPG060) from Homo sapiens (Human).